Reading from the N-terminus, the 527-residue chain is MKVLVAEPISEEAIDYMRKNGLEVEVKTGMSREELIREVPKYEAIVVRSQTKVDAEVIQAAKNLKIIGRAGVGVDNIDINAATQRGIVVVNAPGGNTISTAEHAIALMLAAARKIPQADRSVKEGKWERKKFMGIELRGKTAGVIGLGRVGFEVAKRCKALEMNVLAYDPFVSKERAEQIGVKLVDFDTLLASSDVITVHVPRTKETIGLIGKGQFEKMKDGVIVVNAARGGIVDEAALYEAIKAGKVAAAALDVYEKEPPSPDNPLLKLDNVVTTPHIAASTREAQLNVGMIIAEDIVNMAKGLPVRNAVNLPSIEPSDFEFMMPFLTLAEKMGKIASVRLGGAIRKVKVTCSGKLATKNTEFVTRALLKGLFEPILSNEINLVSAKPVAVERGITIEESKVESVEHYESLLEVWVESNGKEMYLAGTCFGNEYRILKIDVYNVNFVPKGHYIISLHEDKPGVIGRVGTLFGRNNINIAGMIVGRSGDKPGGIQLMLLLVDDPPTPEVLEEMTKLDGIIDATYVEL.

Residues 149 to 150 (RV), D169, 228 to 230 (AAR), and D254 contribute to the NAD(+) site. The active site involves R230. E259 is a catalytic residue. H278 functions as the Proton donor in the catalytic mechanism. 278-281 (HIAA) serves as a coordination point for NAD(+). The 75-residue stretch at 453-527 (YIISLHEDKP…GIIDATYVEL (75 aa)) folds into the ACT domain.

Belongs to the D-isomer specific 2-hydroxyacid dehydrogenase family.

It catalyses the reaction (2R)-3-phosphoglycerate + NAD(+) = 3-phosphooxypyruvate + NADH + H(+). It functions in the pathway amino-acid biosynthesis; L-serine biosynthesis; L-serine from 3-phospho-D-glycerate: step 1/3. The sequence is that of D-3-phosphoglycerate dehydrogenase (serA) from Archaeoglobus fulgidus (strain ATCC 49558 / DSM 4304 / JCM 9628 / NBRC 100126 / VC-16).